We begin with the raw amino-acid sequence, 168 residues long: RNA pyrophosphohydrolase (168 aa).

The region spanning 8–160 (PYRTCVGIAL…KRPVYERVAK (153 aa)) is the Nudix hydrolase domain. Residues 47 to 68 (GGVDPGEDAWEAAKRELYEETS) carry the Nudix box motif.

It belongs to the Nudix hydrolase family. RppH subfamily. The cofactor is a divalent metal cation.

In terms of biological role, accelerates the degradation of transcripts by removing pyrophosphate from the 5'-end of triphosphorylated RNA, leading to a more labile monophosphorylated state that can stimulate subsequent ribonuclease cleavage. The protein is RNA pyrophosphohydrolase of Bradyrhizobium sp. (strain ORS 278).